Consider the following 150-residue polypeptide: MSDNHTLQIEEILDLLPHRYPFLLVDRVLDFEEGKFLRAVKNVSFNEPFFQGHFPGKPIFPGVLILEAMAQATGILAFKSVGKLEPGELYYFAAIDGARFKRPVLPGDQMVLEVEFIKERRGVARFKGVAKVDGEIACEAEMMCARRREV.

His-53 is a catalytic residue.

It belongs to the thioester dehydratase family. FabZ subfamily.

The protein localises to the cytoplasm. It carries out the reaction a (3R)-hydroxyacyl-[ACP] = a (2E)-enoyl-[ACP] + H2O. Its function is as follows. Involved in unsaturated fatty acids biosynthesis. Catalyzes the dehydration of short chain beta-hydroxyacyl-ACPs and long chain saturated and unsaturated beta-hydroxyacyl-ACPs. The protein is 3-hydroxyacyl-[acyl-carrier-protein] dehydratase FabZ of Proteus mirabilis (strain HI4320).